The primary structure comprises 273 residues: F-actin-capping protein subunit alpha (273 aa).

Belongs to the F-actin-capping protein alpha subunit family. As to quaternary structure, component of the F-actin capping complex, composed of a heterodimer of an alpha and a beta subunit.

Its subcellular location is the cytoplasm. The protein localises to the cytoskeleton. The protein resides in the actin patch. Its function is as follows. F-actin-capping proteins bind in a Ca(2+)-independent manner to the fast growing ends of actin filaments (barbed end) thereby blocking the exchange of subunits at these ends. Unlike other capping proteins (such as gelsolin and severin), these proteins do not sever actin filaments. This Aspergillus oryzae (strain ATCC 42149 / RIB 40) (Yellow koji mold) protein is F-actin-capping protein subunit alpha (cap1).